The primary structure comprises 373 residues: Spermidine/putrescine import ATP-binding protein PotA (373 aa).

An ABC transporter domain is found at 5–235 (IVFEHVSKKF…PKSSFVADFI (231 aa)). 37–44 (GPSGCGKT) contributes to the ATP binding site.

Belongs to the ABC transporter superfamily. Spermidine/putrescine importer (TC 3.A.1.11.1) family. As to quaternary structure, the complex is composed of two ATP-binding proteins (PotA), two transmembrane proteins (PotB and PotC) and a solute-binding protein (PotD).

The protein localises to the cell inner membrane. It carries out the reaction ATP + H2O + polyamine-[polyamine-binding protein]Side 1 = ADP + phosphate + polyamineSide 2 + [polyamine-binding protein]Side 1.. Functionally, part of the ABC transporter complex PotABCD involved in spermidine/putrescine import. Responsible for energy coupling to the transport system. The chain is Spermidine/putrescine import ATP-binding protein PotA from Protochlamydia amoebophila (strain UWE25).